Reading from the N-terminus, the 855-residue chain is Cytosolic phospholipase A2 zeta (855 aa).

The C2 domain maps to 27–145 (EKSEPQWKHR…QLGQPCTKNF (119 aa)). Ca(2+) contacts are provided by aspartate 60, aspartate 66, aspartate 116, aspartate 118, and aspartate 123. The PLA2c domain maps to 304–855 (MSSSGDLDLR…RRQAGGRVGG (552 aa)). The active-site Nucleophile is the serine 393. Aspartate 685 serves as the catalytic Proton acceptor.

It depends on Ca(2+) as a cofactor. In terms of tissue distribution, strongly expressed in thyroid, expressed at intermediate level in stomach and at very low level in large intestine and prostate.

The protein localises to the cytoplasm. It localises to the cytosol. The protein resides in the cell membrane. Its subcellular location is the mitochondrion. It catalyses the reaction a 1,2-diacyl-sn-glycero-3-phosphocholine + H2O = a 1-acyl-sn-glycero-3-phosphocholine + a fatty acid + H(+). The catalysed reaction is a 1-O-alkyl-2-acyl-sn-glycero-3-phosphocholine + H2O = a 1-O-alkyl-sn-glycero-3-phosphocholine + a fatty acid + H(+). It carries out the reaction 1-hexadecanoyl-2-(9Z-octadecenoyl)-sn-glycero-3-phosphocholine + H2O = 2-(9Z-octadecenoyl)-sn-glycero-3-phosphocholine + hexadecanoate + H(+). The enzyme catalyses 1-hexadecanoyl-2-(9Z,12Z-octadecadienoyl)-sn-glycero-3-phosphocholine + H2O = (9Z,12Z)-octadecadienoate + 1-hexadecanoyl-sn-glycero-3-phosphocholine + H(+). It catalyses the reaction 1-hexadecanoyl-2-(5Z,8Z,11Z,14Z-eicosatetraenoyl)-sn-glycero-3-phosphocholine + H2O = 1-hexadecanoyl-sn-glycero-3-phosphocholine + (5Z,8Z,11Z,14Z)-eicosatetraenoate + H(+). The catalysed reaction is 1-hexadecanoyl-2-(9Z,12Z-octadecadienoyl)-sn-glycero-3-phosphoethanolamine + H2O = 1-hexadecanoyl-sn-glycero-3-phosphoethanolamine + (9Z,12Z)-octadecadienoate + H(+). It carries out the reaction 1-hexadecanoyl-2-(5Z,8Z,11Z,14Z-eicosatetraenoyl)-sn-glycero-3-phosphoethanolamine + H2O = 1-hexadecanoyl-sn-glycero-3-phosphoethanolamine + (5Z,8Z,11Z,14Z)-eicosatetraenoate + H(+). The enzyme catalyses 1-(5Z,8Z,11Z,14Z-eicosatetraenoyl)-2-O-hexadecyl-sn-glycero-3-phosphocholine + H2O = 2-O-hexadecyl-sn-glycero-3-phosphocholine + (5Z,8Z,11Z,14Z)-eicosatetraenoate + H(+). It catalyses the reaction 1-O-hexadecyl-2-(5Z,8Z,11Z,14Z)-eicosatetraenoyl-sn-glycero-3-phosphocholine + H2O = 1-O-hexadecyl-sn-glycero-3-phosphocholine + (5Z,8Z,11Z,14Z)-eicosatetraenoate + H(+). The catalysed reaction is 1-hexadecanoyl-sn-glycero-3-phosphocholine + H2O = sn-glycerol 3-phosphocholine + hexadecanoate + H(+). Stimulated by cytosolic Ca(2+). Its function is as follows. Has calcium-dependent phospholipase and lysophospholipase activities with a potential role in membrane lipid remodeling and biosynthesis of lipid mediators. Preferentially hydrolyzes the ester bond of the fatty acyl group attached at sn-2 position of phospholipids (phospholipase A2 activity). Selectively hydrolyzes sn-2 arachidonoyl group from membrane phospholipids, providing the precursor for eicosanoid biosynthesis. In myocardial mitochondria, plays a major role in arachidonate release that is metabolically channeled to the formation of cardioprotective eicosanoids, epoxyeicosatrienoates (EETs). This chain is Cytosolic phospholipase A2 zeta (Pla2g4f), found in Mus musculus (Mouse).